The chain runs to 1308 residues: Chromosome partition protein Smc (1308 aa).

34–41 provides a ligand contact to ATP; the sequence is PNGCGKSN. A disordered region spans residues 115-181; sequence AAREASMEEV…VAEGQPSDAQ (67 aa). Residues 137–169 are compositionally biased toward low complexity; sequence TEAEATEQQAAPSEGAAPTTEATAPSTENEAAP. Positions 278–600 form a coiled coil; sequence ITKYKTKKRL…DTLRAEYATL (323 aa). The SMC hinge domain occupies 637–757; that stretch reads AGVLADFLEV…VPDPAIGREL (121 aa). Coiled coils occupy residues 791-1046 and 1110-1148; these read SLKR…ELHA and MALE…EIDQ.

The protein belongs to the SMC family. In terms of assembly, homodimer.

The protein resides in the cytoplasm. In terms of biological role, required for chromosome condensation and partitioning. The chain is Chromosome partition protein Smc from Koribacter versatilis (strain Ellin345).